Here is a 260-residue protein sequence, read N- to C-terminus: MEGGSITPGEDKPEIQSPIPPNQIFILSGQSNMAGRGGVFKDHHNNRWVWDKILPPECAPNSSILRLSADLRWEEAHEPLHVDIDTGKVCGVGPGMAFANAVKNRLETDSAVIGLVPCASGGTAIKEWERGSHLYERMVKRTEESRKCGGEIKAVLWYQGESDVLDIHDAESYGNNMDRLIKNLRHDLNLPSLPIIQVAIASGGGYIDKVREAQLGLKLSNVVCVDAKGLPLKSDNLHLTTEAQVQLGLSLAQAYLSNFC.

Residues 1 to 22 (MEGGSITPGEDKPEIQSPIPPN) form a disordered region. Catalysis depends on residues Ser31, Asp235, and His238.

Belongs to the carbohydrate esterase 6 family.

The polypeptide is Probable carbohydrate esterase At4g34215 (Arabidopsis thaliana (Mouse-ear cress)).